The following is a 273-amino-acid chain: Putative peptidyl-prolyl cis-trans isomerase Cbf2 (273 aa).

The signal sequence occupies residues M1–A21. Positions P131–N228 constitute a PpiC domain.

It carries out the reaction [protein]-peptidylproline (omega=180) = [protein]-peptidylproline (omega=0). The sequence is that of Putative peptidyl-prolyl cis-trans isomerase Cbf2 (cbf2) from Campylobacter jejuni subsp. jejuni serotype O:23/36 (strain 81-176).